The sequence spans 201 residues: 3-isopropylmalate dehydratase small subunit (201 aa).

Belongs to the LeuD family. LeuD type 1 subfamily. As to quaternary structure, heterodimer of LeuC and LeuD.

The catalysed reaction is (2R,3S)-3-isopropylmalate = (2S)-2-isopropylmalate. The protein operates within amino-acid biosynthesis; L-leucine biosynthesis; L-leucine from 3-methyl-2-oxobutanoate: step 2/4. Its function is as follows. Catalyzes the isomerization between 2-isopropylmalate and 3-isopropylmalate, via the formation of 2-isopropylmaleate. The sequence is that of 3-isopropylmalate dehydratase small subunit from Erwinia tasmaniensis (strain DSM 17950 / CFBP 7177 / CIP 109463 / NCPPB 4357 / Et1/99).